The following is a 432-amino-acid chain: Calcium uptake protein 2, mitochondrial (432 aa).

A mitochondrion-targeting transit peptide spans 1–22 (MAAAAGRSAWLAAWGGRLRRGL). Residues 169-204 (KPHSGFHVAFKMLDVDGNEMIERKEFVKLQKIISKQ) enclose the EF-hand 1 domain. Positions 182, 184, 186, 188, 190, and 193 each coordinate Ca(2+). Serine 202 carries the phosphoserine modification. The region spanning 224–259 (EPGVNTTLQVRFFGKRGEKKLHYKEFRRFMENLQTE) is the EF-hand 2; degenerate domain. Positions 290–325 (TENKDIYWRNVREKLSVGESISLDEFKSFCHFTTHL) constitute an EF-hand 3; degenerate domain. The EF-hand 4 domain maps to 359–394 (LSDNLLDTVFKIFDLDGDECLSHGEFLGVLKNRMHR). Ca(2+) is bound by residues aspartate 372, aspartate 374, aspartate 376, cysteine 378, and glutamate 383.

This sequence belongs to the MICU1 family. MICU2 subfamily. Heterodimer; disulfide-linked; heterodimerizes with MICU1. Component of the uniplex complex, composed of MCU, EMRE/SMDT1, MICU1 and MICU2 in a 4:4:1:1 stoichiometry. Predominantly expressed in stomach, intestine, skeletal muscle, kidney, heart, testis, prostate and uterus.

The protein localises to the mitochondrion intermembrane space. The protein resides in the mitochondrion inner membrane. Calcium sensor of the mitochondrial calcium uniporter (MCU) channel, which senses calcium level via its EF-hand domains. MICU1 and MICU2 form a disulfide-linked heterodimer that stimulates and inhibits MCU activity, depending on the concentration of calcium. At low calcium levels, MICU1 occludes the pore of the MCU channel, preventing mitochondrial calcium uptake. At higher calcium levels, calcium-binding to MICU1 and MICU2 induces a conformational change that weakens MCU-MICU1 interactions and moves the MICU1-MICU2 heterodimer away from the pore, allowing calcium permeation through the MCU channel. In Mus musculus (Mouse), this protein is Calcium uptake protein 2, mitochondrial.